A 712-amino-acid chain; its full sequence is DNA topoisomerase 3 (712 aa).

The 134-residue stretch at 2–135 (KSLIIAEKPS…TKRLWISSVT (134 aa)) folds into the Toprim domain. Positions 8 and 104 each coordinate Mg(2+). Positions 152–581 (FNNLYHAALA…EMKAFTNQVV (430 aa)) constitute a Topo IA-type catalytic domain. An interaction with DNA region spans residues 186–191 (SLGRVQ). The active-site O-(5'-phospho-DNA)-tyrosine intermediate is the tyrosine 305.

The protein belongs to the type IA topoisomerase family. Requires Mg(2+) as cofactor.

The enzyme catalyses ATP-independent breakage of single-stranded DNA, followed by passage and rejoining.. Functionally, releases the supercoiling and torsional tension of DNA, which is introduced during the DNA replication and transcription, by transiently cleaving and rejoining one strand of the DNA duplex. Introduces a single-strand break via transesterification at a target site in duplex DNA. The scissile phosphodiester is attacked by the catalytic tyrosine of the enzyme, resulting in the formation of a DNA-(5'-phosphotyrosyl)-enzyme intermediate and the expulsion of a 3'-OH DNA strand. The free DNA strand then undergoes passage around the unbroken strand, thus removing DNA supercoils. Finally, in the religation step, the DNA 3'-OH attacks the covalent intermediate to expel the active-site tyrosine and restore the DNA phosphodiester backbone. In Staphylococcus saprophyticus subsp. saprophyticus (strain ATCC 15305 / DSM 20229 / NCIMB 8711 / NCTC 7292 / S-41), this protein is DNA topoisomerase 3.